Consider the following 96-residue polypeptide: MPGPTPSGTNVGSSGRSPSKAVAARAAGSTVRQRKNASCGTRSAGRTTSAGTGGMWRFYTEDSPGLKVGPVPVLVMSLLFIAAVFMLHIWGKYTRS.

Residues 1–17 (MPGPTPSGTNVGSSGRS) are compositionally biased toward polar residues. Residues 1 to 54 (MPGPTPSGTNVGSSGRSPSKAVAARAAGSTVRQRKNASCGTRSAGRTTSAGTGG) are disordered. Proline 2 carries the post-translational modification N-acetylproline. The Cytoplasmic segment spans residues 2–70 (PGPTPSGTNV…EDSPGLKVGP (69 aa)). Serine 7 is modified (phosphoserine). Threonine 9 is modified (phosphothreonine). Residues serine 13, serine 14, and serine 17 each carry the phosphoserine modification. Cysteine 39 carries S-palmitoyl cysteine lipidation. The span at 40 to 50 (GTRSAGRTTSA) shows a compositional bias: low complexity. Residues 71–91 (VPVLVMSLLFIAAVFMLHIWG) form a helical membrane-spanning segment.

This sequence belongs to the SEC61-beta family. As to quaternary structure, the SEC61 channel-forming translocon complex consists of channel-forming core components SEC61A1, SEC61B and SEC61G and different auxiliary components such as SEC62 and SEC63. The SEC61 channel associates with the multi-pass translocon (MPT) complex. Interacts with TRAM1.

Its subcellular location is the endoplasmic reticulum membrane. Functionally, component of SEC61 channel-forming translocon complex that mediates transport of signal peptide-containing precursor polypeptides across the endoplasmic reticulum (ER). Forms a ribosome receptor and a gated pore in the ER membrane, both functions required for cotranslational translocation of nascent polypeptides. The SEC61 channel is also involved in ER membrane insertion of transmembrane proteins: it mediates membrane insertion of the first few transmembrane segments of proteins, while insertion of subsequent transmembrane regions of multi-pass membrane proteins is mediated by the multi-pass translocon (MPT) complex. The SEC61 channel cooperates with the translocating protein TRAM1 to import nascent proteins into the ER. Required for PKD1/Polycystin-1 biogenesis. The polypeptide is Protein transport protein Sec61 subunit beta (Mus musculus (Mouse)).